A 157-amino-acid chain; its full sequence is Phosphopantetheine adenylyltransferase (157 aa).

Ser9 provides a ligand contact to substrate. Residues 9–10 and His17 each bind ATP; that span reads SF. 3 residues coordinate substrate: Lys41, Leu74, and Lys88. ATP is bound by residues 89–91, Glu99, and 123–129; these read GLR and YTHVSSS.

This sequence belongs to the bacterial CoaD family. As to quaternary structure, homohexamer. The cofactor is Mg(2+).

The protein resides in the cytoplasm. The enzyme catalyses (R)-4'-phosphopantetheine + ATP + H(+) = 3'-dephospho-CoA + diphosphate. The protein operates within cofactor biosynthesis; coenzyme A biosynthesis; CoA from (R)-pantothenate: step 4/5. Reversibly transfers an adenylyl group from ATP to 4'-phosphopantetheine, yielding dephospho-CoA (dPCoA) and pyrophosphate. The protein is Phosphopantetheine adenylyltransferase of Micrococcus luteus (strain ATCC 4698 / DSM 20030 / JCM 1464 / CCM 169 / CCUG 5858 / IAM 1056 / NBRC 3333 / NCIMB 9278 / NCTC 2665 / VKM Ac-2230) (Micrococcus lysodeikticus).